A 214-amino-acid polypeptide reads, in one-letter code: Orotate phosphoribosyltransferase (214 aa).

Residues Arg125, Lys126, Lys129, His131, and 151-159 (EDTSTTGNS) contribute to the 5-phospho-alpha-D-ribose 1-diphosphate site. Residues Thr155 and Arg183 each coordinate orotate.

The protein belongs to the purine/pyrimidine phosphoribosyltransferase family. PyrE subfamily. In terms of assembly, homodimer. Mg(2+) is required as a cofactor.

It catalyses the reaction orotidine 5'-phosphate + diphosphate = orotate + 5-phospho-alpha-D-ribose 1-diphosphate. It functions in the pathway pyrimidine metabolism; UMP biosynthesis via de novo pathway; UMP from orotate: step 1/2. Catalyzes the transfer of a ribosyl phosphate group from 5-phosphoribose 1-diphosphate to orotate, leading to the formation of orotidine monophosphate (OMP). In Tropheryma whipplei (strain TW08/27) (Whipple's bacillus), this protein is Orotate phosphoribosyltransferase.